Reading from the N-terminus, the 133-residue chain is Triatox (133 aa).

An N-terminal signal peptide occupies residues 1 to 22 (MTTLRVLLAVCCAAYCILAEDV). A CUB domain is found at 23-125 (TVPANGELKL…RAMCTVYSAE (103 aa)). An intrachain disulfide couples Cys-70 to Cys-86.

It belongs to the venom CUB family. In terms of tissue distribution, expressed by the venom gland.

The protein resides in the secreted. In terms of biological role, may function as an antimicrobial peptide and may be related to the innate defense of the insect in the salivary glands. This chain is Triatox, found in Triatoma infestans (Assassin bug).